The following is a 1830-amino-acid chain: Urea amidolyase (1830 aa).

ATP is bound by residues 115–122 (GAIVIGKT), Lys-740, Glu-823, and Asn-858. The region spanning 625 to 1068 (PFETVLIANR…ATKILDSYDY (444 aa)) is the Biotin carboxylation domain. One can recognise an ATP-grasp domain in the interval 744-941 (REIAEKAGVP…LVEWMLRIAA (198 aa)). The region spanning 1752-1830 (AVEEEYPEDA…DAGDLVAVIQ (79 aa)) is the Biotinyl-binding domain. Lys-1796 carries the N6-biotinyllysine modification.

It belongs to the DUR1,2 family. In terms of assembly, monomer. The cofactor is biotin.

It catalyses the reaction urea + hydrogencarbonate + ATP = urea-1-carboxylate + ADP + phosphate + H(+). The catalysed reaction is urea-1-carboxylate + H2O + 3 H(+) = 2 NH4(+) + 2 CO2. It participates in nitrogen metabolism; urea degradation; CO(2) and NH(3) from urea (allophanate route): step 1/2. The protein operates within nitrogen metabolism; urea degradation; CO(2) and NH(3) from urea (allophanate route): step 2/2. In terms of biological role, involved in uracil catabolism. Hydrolysis of urea to ammonia and CO(2). The polypeptide is Urea amidolyase (DUR1,2) (Lachancea kluyveri (Yeast)).